We begin with the raw amino-acid sequence, 409 residues long: Dual-specificity RNA methyltransferase RlmN (409 aa).

Glu121 serves as the catalytic Proton acceptor. Positions 127–376 (EEGRGTLCIS…IRTPRGRDIL (250 aa)) constitute a Radical SAM core domain. Cysteines 134 and 379 form a disulfide. Positions 141, 145, and 148 each coordinate [4Fe-4S] cluster. S-adenosyl-L-methionine-binding positions include 205–206 (GE), Ser237, 259–261 (SLH), and Asn336. Cys379 acts as the S-methylcysteine intermediate in catalysis.

Belongs to the radical SAM superfamily. RlmN family. [4Fe-4S] cluster is required as a cofactor.

It localises to the cytoplasm. It carries out the reaction adenosine(2503) in 23S rRNA + 2 reduced [2Fe-2S]-[ferredoxin] + 2 S-adenosyl-L-methionine = 2-methyladenosine(2503) in 23S rRNA + 5'-deoxyadenosine + L-methionine + 2 oxidized [2Fe-2S]-[ferredoxin] + S-adenosyl-L-homocysteine. It catalyses the reaction adenosine(37) in tRNA + 2 reduced [2Fe-2S]-[ferredoxin] + 2 S-adenosyl-L-methionine = 2-methyladenosine(37) in tRNA + 5'-deoxyadenosine + L-methionine + 2 oxidized [2Fe-2S]-[ferredoxin] + S-adenosyl-L-homocysteine. In terms of biological role, specifically methylates position 2 of adenine 2503 in 23S rRNA and position 2 of adenine 37 in tRNAs. m2A2503 modification seems to play a crucial role in the proofreading step occurring at the peptidyl transferase center and thus would serve to optimize ribosomal fidelity. The chain is Dual-specificity RNA methyltransferase RlmN from Rhizobium etli (strain ATCC 51251 / DSM 11541 / JCM 21823 / NBRC 15573 / CFN 42).